Reading from the N-terminus, the 266-residue chain is Putative cysteine-rich repeat secretory protein 20 (266 aa).

Residues 1–33 (MYFPPSSVPKRLVLVHISAVVAIKLLLIRSVSS) form the signal peptide. Gnk2-homologous domains lie at 40-142 (YLQH…SIRN) and 148-261 (YNNN…LYPF).

This sequence belongs to the cysteine-rich repeat secretory protein family.

The protein localises to the secreted. The sequence is that of Putative cysteine-rich repeat secretory protein 20 (CRRSP20) from Arabidopsis thaliana (Mouse-ear cress).